The chain runs to 314 residues: 4-hydroxy-3-methylbut-2-enyl diphosphate reductase (314 aa).

A [4Fe-4S] cluster-binding site is contributed by C12. Positions 41 and 74 each coordinate (2E)-4-hydroxy-3-methylbut-2-enyl diphosphate. Dimethylallyl diphosphate is bound by residues H41 and H74. The isopentenyl diphosphate site is built by H41 and H74. C96 contributes to the [4Fe-4S] cluster binding site. A (2E)-4-hydroxy-3-methylbut-2-enyl diphosphate-binding site is contributed by H124. Position 124 (H124) interacts with dimethylallyl diphosphate. H124 contacts isopentenyl diphosphate. E126 (proton donor) is an active-site residue. Position 168 (T168) interacts with (2E)-4-hydroxy-3-methylbut-2-enyl diphosphate. Residue C198 participates in [4Fe-4S] cluster binding. The (2E)-4-hydroxy-3-methylbut-2-enyl diphosphate site is built by S226, S227, N228, and S270. S226, S227, N228, and S270 together coordinate dimethylallyl diphosphate. Residues S226, S227, N228, and S270 each coordinate isopentenyl diphosphate.

The protein belongs to the IspH family. Requires [4Fe-4S] cluster as cofactor.

The catalysed reaction is isopentenyl diphosphate + 2 oxidized [2Fe-2S]-[ferredoxin] + H2O = (2E)-4-hydroxy-3-methylbut-2-enyl diphosphate + 2 reduced [2Fe-2S]-[ferredoxin] + 2 H(+). The enzyme catalyses dimethylallyl diphosphate + 2 oxidized [2Fe-2S]-[ferredoxin] + H2O = (2E)-4-hydroxy-3-methylbut-2-enyl diphosphate + 2 reduced [2Fe-2S]-[ferredoxin] + 2 H(+). It participates in isoprenoid biosynthesis; dimethylallyl diphosphate biosynthesis; dimethylallyl diphosphate from (2E)-4-hydroxy-3-methylbutenyl diphosphate: step 1/1. It functions in the pathway isoprenoid biosynthesis; isopentenyl diphosphate biosynthesis via DXP pathway; isopentenyl diphosphate from 1-deoxy-D-xylulose 5-phosphate: step 6/6. Functionally, catalyzes the conversion of 1-hydroxy-2-methyl-2-(E)-butenyl 4-diphosphate (HMBPP) into a mixture of isopentenyl diphosphate (IPP) and dimethylallyl diphosphate (DMAPP). Acts in the terminal step of the DOXP/MEP pathway for isoprenoid precursor biosynthesis. This Pseudomonas aeruginosa (strain LESB58) protein is 4-hydroxy-3-methylbut-2-enyl diphosphate reductase.